Reading from the N-terminus, the 614-residue chain is MKGTAASALLVALSATAAQARPVVDERFPYTGPAVPIGDWVDPTINGNGKGFPRLVEPPAVKPATANPRNNVNVISLSYIPKGMHIHYQTPFGLGQLPAVRWGKDPRNLNSTAQGYSHTYDRTPSCSQVKAVTQCSQFFHEVSIDGLEPDTTYYYQIPAANGTTQSEVLSFKTSRPAGHPGSFSVAVLNDMGYTNAHGTHKQLVKAATEGTAFAWHGGDLSYADDWYSGILACADDWPVCYNGTSSTLPGGGPLPEEYKKPLPAGEIPDQGGPQGGDMSVLYESNWDLWQQWLNNVTLKIPYMVLPGNHEASCAEFDGPHNILTAYLNDDIANGTAPTDNLTYYSCPPSQRNFTAYQHRFRMPGPETGGVGNFWYSFDYGLAHFVSIDGETDFANSPEWNFAEDVTGNETLPSESETFITDSGPFGNVNGSVHETKSYEQWHWLQQDLAKVDRSKTPWVIVMSHRPMYSSAYSSYQLHVREAFEGLLLKYGVDAYLSGHIHWYERLYPLGANGTIDTAAIVNNNTYYAHNGKSITHIINGMAGNIESHSEFSDGEGLTNITALLDKVHYGFSKLTIFNETALKWELIRGDDGTVGDSLTLLKPSHVAGGKKLHS.

Residues 1–22 form the signal peptide; that stretch reads MKGTAASALLVALSATAAQARP. Positions 80 to 176 constitute a Fibronectin type-III domain; it reads IPKGMHIHYQ…EVLSFKTSRP (97 aa). Asn-110, Asn-161, Asn-242, Asn-295, Asn-333, Asn-340, Asn-352, Asn-408, Asn-429, Asn-512, Asn-523, Asn-559, and Asn-578 each carry an N-linked (GlcNAc...) asparagine glycan. Residues 606–614 constitute a propeptide that is removed on maturation; it reads VAGGKKLHS.

In terms of assembly, monomer. Requires Cu cation as cofactor. Glycosylated; probably with N-linked high-mannose oligosaccharides.

Its subcellular location is the secreted. The catalysed reaction is a phosphate monoester + H2O = an alcohol + phosphate. With respect to regulation, competitively inhibited by phosphomycin and inorganic orthophosphate. The protein is Acid phosphatase (aphA) of Aspergillus ficuum.